Consider the following 420-residue polypeptide: Tyrosine--tRNA ligase (420 aa).

Position 36 (Tyr36) interacts with L-tyrosine. The 'HIGH' region motif lies at 41–50 (PTADSLHIGH). Positions 170 and 174 each coordinate L-tyrosine. Positions 231–235 (KFGKT) match the 'KMSKS' region motif. Lys234 lines the ATP pocket. One can recognise an S4 RNA-binding domain in the interval 353–420 (RNIVEVIVET…KKKYFMVNYK (68 aa)).

The protein belongs to the class-I aminoacyl-tRNA synthetase family. TyrS type 1 subfamily. In terms of assembly, homodimer.

The protein resides in the cytoplasm. The catalysed reaction is tRNA(Tyr) + L-tyrosine + ATP = L-tyrosyl-tRNA(Tyr) + AMP + diphosphate + H(+). In terms of biological role, catalyzes the attachment of tyrosine to tRNA(Tyr) in a two-step reaction: tyrosine is first activated by ATP to form Tyr-AMP and then transferred to the acceptor end of tRNA(Tyr). The protein is Tyrosine--tRNA ligase of Staphylococcus saprophyticus subsp. saprophyticus (strain ATCC 15305 / DSM 20229 / NCIMB 8711 / NCTC 7292 / S-41).